A 1043-amino-acid polypeptide reads, in one-letter code: Beta-klotho (1043 aa).

The Extracellular portion of the chain corresponds to 1-994 (MKTGCAAGSP…ICSFLVEKKP (994 aa)). Glycosyl hydrolase-1 stretches follow at residues 77–506 (LYDT…DNGF) and 515–965 (MKGR…SSGL). N-linked (GlcNAc...) asparagine glycans are attached at residues Asn84, Asn122, Asn161, Asn211, Asn262, Asn308, Asn389, Asn552, Asn609, Asn700, Asn704, and Asn837. Residues 995–1015 (LIFFGCCFISTLAVLLSITVF) traverse the membrane as a helical segment. Over 1016–1043 (HHQKRRKFQKARNLQNIPLKKGHSRVFS) the chain is Cytoplasmic.

Belongs to the glycosyl hydrolase 1 family. Klotho subfamily. In terms of assembly, interacts with FGF19; this interaction is direct. Interacts (via C-terminus) with FGF21; this interaction is direct. Interacts with FGFR1 and FGFR4. In terms of tissue distribution, present in liver, muscle and white adipose tissue, but not in kidney (at protein level). Expressed in liver and pancreas, and at lower levels in skin, stomach, skeletal muscle, small intestine and lung.

It is found in the cell membrane. Contributes to the transcriptional repression of cholesterol 7-alpha-hydroxylase (CYP7A1), the rate-limiting enzyme in bile acid synthesis. Probably inactive as a glycosidase. Increases the ability of FGFR1 and FGFR4 to bind FGF21. The protein is Beta-klotho (Klb) of Mus musculus (Mouse).